The following is a 98-amino-acid chain: Lactococcin-A immunity protein (98 aa).

Functionally, imparts immunity to lactococcin-A to naturally sensitive host strains. This chain is Lactococcin-A immunity protein (lciA), found in Lactococcus lactis subsp. cremoris (Streptococcus cremoris).